The sequence spans 551 residues: Cytochrome bc1 complex cytochrome b subunit (551 aa).

The chain crosses the membrane as a helical span at residues 44-64 (FLLGEIALYSFIVLLLTGVYL). Heme contacts are provided by histidine 113 and histidine 127. 3 helical membrane-spanning segments follow: residues 117–137 (ALMF…TGAF), 145–165 (WVIG…GYSM), and 188–208 (VIGT…TILI). Heme contacts are provided by histidine 215 and histidine 230. The next 5 membrane-spanning stretches (helical) occupy residues 216-236 (ILLI…LVWF), 265-285 (SGAF…FLQI), 334-354 (PVWV…YPFL), 380-400 (IGAM…NDII), and 417-437 (IGMV…CIGL). The disordered stretch occupies residues 532 to 551 (ALREHQDSIASSPNGERGKH).

This sequence belongs to the cytochrome b family. As to quaternary structure, the cytochrome bc1 complex is composed of a cytochrome b (QcrB), the Rieske iron-sulfur protein (QcrA) and a diheme cytochrome c (QcrC) subunit. Requires heme as cofactor.

The protein resides in the cell membrane. The catalysed reaction is a quinol + 2 Fe(III)-[cytochrome c](out) = a quinone + 2 Fe(II)-[cytochrome c](out) + 2 H(+)(out). Its function is as follows. Cytochrome b subunit of the cytochrome bc1 complex, an essential component of the respiratory electron transport chain required for ATP synthesis. The bc1 complex catalyzes the oxidation of ubiquinol and the reduction of cytochrome c in the respiratory chain. The bc1 complex operates through a Q-cycle mechanism that couples electron transfer to generation of the proton gradient that drives ATP synthesis. The cytochrome b subunit contains two ubiquinol reactive sites: the oxidation (QP) site and the reduction (QN) site. The polypeptide is Cytochrome bc1 complex cytochrome b subunit (qcrB) (Mycobacterium leprae (strain TN)).